Here is a 152-residue protein sequence, read N- to C-terminus: MSNKVHVGNIEMEEGLSKTKWMVLEPSEKIKKIPKRLWSVGKEDPRRVIHAFKVGHSLTLVSLLYFMENLFKGIGSNAIWAVMTVVAVLLEFFAVEGLTISEKVILSMAARGRESAAEPHERNEAGNVCHSIKFLPKSIARAKQHHVLNQPY.

The next 2 helical transmembrane spans lie at Val48–Glu68 and Ala78–Leu98.

This sequence belongs to the aromatic acid exporter (TC 2.A.85) family.

It localises to the membrane. Its function is as follows. Malate transporter. The sequence is that of Putative aluminum-activated malate transporter 11 (ALMT11) from Arabidopsis thaliana (Mouse-ear cress).